The following is a 75-amino-acid chain: MTEKGYPSADAYEKELLSLLETVRYQAKQDTTLQIAERMLDYGVDVQLTAAVTGLTRDEILSGKRGKIPLQVKVK.

This is an uncharacterized protein from Halalkalibacterium halodurans (strain ATCC BAA-125 / DSM 18197 / FERM 7344 / JCM 9153 / C-125) (Bacillus halodurans).